Reading from the N-terminus, the 305-residue chain is MSIFFSIRFWPAAISAAILWLPQVLGRSNGTAPNYTVEELWKLETTFWDNFLYPANVEQMEAINSTLFTQDVQGRVDITRVFNGSELNTEYIFGLFSDPDHVSLVGVPVDYSITQFIAQGNIASATTVVTFNATSFGNLLVPVTIDTWIMWDADGRIMQYDATFRWFGFLLDTLVEALAESINGTTSQATASLTQLLATTICATHDQYCTGSNQQYDNNTACLDFLTSAIPLGKDYELGRNTLLCREVHEHMVQYDPALHCPHIGPTGGDYCVDDQTYAQKVLQKYFNQSWIVGVPSTGDIWLGD.

Residues 1–26 (MSIFFSIRFWPAAISAAILWLPQVLG) form the signal peptide. N-linked (GlcNAc...) asparagine glycosylation is found at asparagine 29, asparagine 34, asparagine 64, asparagine 83, asparagine 132, asparagine 183, asparagine 218, and asparagine 288.

It belongs to the bfoA family.

Its function is as follows. Part of the gene cluster that mediates the biosynthesis of aurasperone B, a dimeric gamma-naphthopyrone. The first step in the biosynthesis of aurasperone B is the production of gamma-naphthopyrone precursor YWA1 by the non-reducing polyketide synthase albA, via condensation of one acetyl-CoA starter unit with 6 malonyl-CoA units. YWA1 is then methylated by aunE at position C-6 to yield foncesin which is further methylated at position C-8 by aunD to produce fonsecin B. A key enzyme in the biosynthetic pathway is the cytochrome P450 monooxygenase aunB which catalyzes the oxidative dimerization of fonsecin B to aurasperone B. AunB also catalyzes the oxidative dimerization of rubrofusarin B into aurasperone A. The protein is Aurasperone B biosynthesis cluster protein A of Aspergillus niger (strain ATCC MYA-4892 / CBS 513.88 / FGSC A1513).